Here is a 341-residue protein sequence, read N- to C-terminus: L-threonine 3-dehydrogenase (341 aa).

Cys38 is a binding site for Zn(2+). Residues Thr40 and His43 each act as charge relay system in the active site. Positions 63, 64, 93, 96, 99, and 107 each coordinate Zn(2+). NAD(+) is bound by residues Ile175, Asp195, Arg200, 262–264, and 286–287; these read LGI and IY.

The protein belongs to the zinc-containing alcohol dehydrogenase family. Homotetramer. It depends on Zn(2+) as a cofactor.

It localises to the cytoplasm. The catalysed reaction is L-threonine + NAD(+) = (2S)-2-amino-3-oxobutanoate + NADH + H(+). It participates in amino-acid degradation; L-threonine degradation via oxydo-reductase pathway; glycine from L-threonine: step 1/2. Catalyzes the NAD(+)-dependent oxidation of L-threonine to 2-amino-3-ketobutyrate. This chain is L-threonine 3-dehydrogenase, found in Salmonella typhi.